A 405-amino-acid polypeptide reads, in one-letter code: 8-amino-7-oxononanoate synthase 1 (405 aa).

Arg-29 lines the substrate pocket. 116-117 serves as a coordination point for pyridoxal 5'-phosphate; that stretch reads GY. His-141 serves as a coordination point for substrate. Residues Ser-187, His-215, and Thr-247 each coordinate pyridoxal 5'-phosphate. Residue Lys-250 is modified to N6-(pyridoxal phosphate)lysine. Residue Thr-368 participates in substrate binding.

The protein belongs to the class-II pyridoxal-phosphate-dependent aminotransferase family. BioF subfamily. As to quaternary structure, homodimer. It depends on pyridoxal 5'-phosphate as a cofactor.

The catalysed reaction is 6-carboxyhexanoyl-[ACP] + L-alanine + H(+) = (8S)-8-amino-7-oxononanoate + holo-[ACP] + CO2. The protein operates within cofactor biosynthesis; biotin biosynthesis. Functionally, catalyzes the decarboxylative condensation of pimeloyl-[acyl-carrier protein] and L-alanine to produce 8-amino-7-oxononanoate (AON), [acyl-carrier protein], and carbon dioxide. The sequence is that of 8-amino-7-oxononanoate synthase 1 from Polaromonas sp. (strain JS666 / ATCC BAA-500).